A 476-amino-acid polypeptide reads, in one-letter code: Ribulose bisphosphate carboxylase large chain (476 aa).

Substrate contacts are provided by Asn116 and Thr166. The Proton acceptor role is filled by Lys168. Substrate is bound at residue Lys170. Lys194, Asp196, and Glu197 together coordinate Mg(2+). At Lys194 the chain carries N6-carboxylysine. His286 acts as the Proton acceptor in catalysis. Substrate is bound by residues Arg287, His319, and Ser371.

It belongs to the RuBisCO large chain family. Type I subfamily. Heterohexadecamer of 8 large chains and 8 small chains. Mg(2+) serves as cofactor.

It catalyses the reaction 2 (2R)-3-phosphoglycerate + 2 H(+) = D-ribulose 1,5-bisphosphate + CO2 + H2O. It carries out the reaction D-ribulose 1,5-bisphosphate + O2 = 2-phosphoglycolate + (2R)-3-phosphoglycerate + 2 H(+). RuBisCO catalyzes two reactions: the carboxylation of D-ribulose 1,5-bisphosphate, the primary event in carbon dioxide fixation, as well as the oxidative fragmentation of the pentose substrate. Both reactions occur simultaneously and in competition at the same active site. This chain is Ribulose bisphosphate carboxylase large chain, found in Pseudonocardia dioxanivorans (strain ATCC 55486 / DSM 44775 / JCM 13855 / CB1190).